Consider the following 265-residue polypeptide: Auxin-responsive protein IAA22 (265 aa).

Disordered regions lie at residues 54–88 (LSTPKPADADDLMNKMKPCSDEGHGSRDAAQERRP) and 172–199 (DGREAGSGRRPAAGVDQVSERPDVSPAM). The segment covering 65 to 88 (LMNKMKPCSDEGHGSRDAAQERRP) has biased composition (basic and acidic residues). The 104-residue stretch at 91 to 194 (TMFVKVNLEG…GVDQVSERPD (104 aa)) folds into the PB1 domain.

It belongs to the Aux/IAA family. As to quaternary structure, homodimers and heterodimers. As to expression, highly expressed in flowers. Expressed in roots and seedlings.

The protein resides in the nucleus. Functionally, aux/IAA proteins are short-lived transcriptional factors that function as repressors of early auxin response genes at low auxin concentrations. The protein is Auxin-responsive protein IAA22 (IAA22) of Oryza sativa subsp. japonica (Rice).